Reading from the N-terminus, the 148-residue chain is Nucleoside diphosphate kinase 1 (148 aa).

Residues lysine 9, phenylalanine 57, arginine 85, threonine 91, arginine 102, and asparagine 112 each contribute to the ATP site. Catalysis depends on histidine 115, which acts as the Pros-phosphohistidine intermediate.

It belongs to the NDK family. Mg(2+) is required as a cofactor. Post-translationally, the N-terminus is blocked.

The catalysed reaction is a 2'-deoxyribonucleoside 5'-diphosphate + ATP = a 2'-deoxyribonucleoside 5'-triphosphate + ADP. It carries out the reaction a ribonucleoside 5'-diphosphate + ATP = a ribonucleoside 5'-triphosphate + ADP. Functionally, major role in the synthesis of nucleoside triphosphates other than ATP. The ATP gamma phosphate is transferred to the NDP beta phosphate via a ping-pong mechanism, using a phosphorylated active-site intermediate. The sequence is that of Nucleoside diphosphate kinase 1 (NDPK1) from Spinacia oleracea (Spinach).